Here is a 419-residue protein sequence, read N- to C-terminus: Transcription termination factor Rho (419 aa).

In terms of domain architecture, Rho RNA-BD spans 48–123 (DIFGDGVLEI…LKVNEVNFDK (76 aa)). RNA-binding regions lie at residues 61-66 (GFGFLR), 78-80 (DIY), and 108-110 (ERY). Residues 169 to 174 (GRGQRG), 181 to 186 (KAGKTM), and Arg-212 each bind ATP. An RNA-binding 2 region spans residues 284-288 (VLTGG).

This sequence belongs to the Rho family. As to quaternary structure, homohexamer. The homohexamer assembles into an open ring structure.

In terms of biological role, facilitates transcription termination by a mechanism that involves Rho binding to the nascent RNA, activation of Rho's RNA-dependent ATPase activity, and release of the mRNA from the DNA template. In Escherichia coli O157:H7, this protein is Transcription termination factor Rho.